Here is a 142-residue protein sequence, read N- to C-terminus: Large ribosomal subunit protein uL13 (142 aa).

Belongs to the universal ribosomal protein uL13 family. As to quaternary structure, part of the 50S ribosomal subunit.

This protein is one of the early assembly proteins of the 50S ribosomal subunit, although it is not seen to bind rRNA by itself. It is important during the early stages of 50S assembly. In Actinobacillus succinogenes (strain ATCC 55618 / DSM 22257 / CCUG 43843 / 130Z), this protein is Large ribosomal subunit protein uL13.